The chain runs to 169 residues: Peptide deformylase (169 aa).

Fe cation-binding residues include C91 and H133. E134 is a catalytic residue. H137 serves as a coordination point for Fe cation.

The protein belongs to the polypeptide deformylase family. Fe(2+) serves as cofactor.

It carries out the reaction N-terminal N-formyl-L-methionyl-[peptide] + H2O = N-terminal L-methionyl-[peptide] + formate. Functionally, removes the formyl group from the N-terminal Met of newly synthesized proteins. Requires at least a dipeptide for an efficient rate of reaction. N-terminal L-methionine is a prerequisite for activity but the enzyme has broad specificity at other positions. The protein is Peptide deformylase of Erwinia tasmaniensis (strain DSM 17950 / CFBP 7177 / CIP 109463 / NCPPB 4357 / Et1/99).